The following is a 457-amino-acid chain: UDP-N-acetylmuramate--L-alanine ligase (457 aa).

112-118 (GAHGKTS) contributes to the ATP binding site.

This sequence belongs to the MurCDEF family.

Its subcellular location is the cytoplasm. The enzyme catalyses UDP-N-acetyl-alpha-D-muramate + L-alanine + ATP = UDP-N-acetyl-alpha-D-muramoyl-L-alanine + ADP + phosphate + H(+). It functions in the pathway cell wall biogenesis; peptidoglycan biosynthesis. Its function is as follows. Cell wall formation. In Desulfosudis oleivorans (strain DSM 6200 / JCM 39069 / Hxd3) (Desulfococcus oleovorans), this protein is UDP-N-acetylmuramate--L-alanine ligase.